We begin with the raw amino-acid sequence, 398 residues long: Chalcone synthase 1 (398 aa).

Residue cysteine 167 is part of the active site.

This sequence belongs to the thiolase-like superfamily. Chalcone/stilbene synthases family.

It catalyses the reaction (E)-4-coumaroyl-CoA + 3 malonyl-CoA + 3 H(+) = 2',4,4',6'-tetrahydroxychalcone + 3 CO2 + 4 CoA. Its pathway is secondary metabolite biosynthesis; flavonoid biosynthesis. In terms of biological role, the primary product of this enzyme is 4,2',4',6'-tetrahydroxychalcone (also termed naringenin-chalcone or chalcone) which can under specific conditions spontaneously isomerize into naringenin. The chain is Chalcone synthase 1 (CHS1) from Gerbera hybrida (Daisy).